The primary structure comprises 499 residues: Pyruvate kinase (499 aa).

R50 contacts substrate. K(+) is bound by residues N52, S54, D84, and T85. 52–55 (NFSH) serves as a coordination point for ATP. An ATP-binding site is contributed by R91. A Mg(2+)-binding site is contributed by E241. Positions 264, 265, and 297 each coordinate substrate. D265 is a binding site for Mg(2+).

It belongs to the pyruvate kinase family. In terms of assembly, homotetramer. Mg(2+) is required as a cofactor. The cofactor is K(+).

It carries out the reaction pyruvate + ATP = phosphoenolpyruvate + ADP + H(+). It functions in the pathway carbohydrate degradation; glycolysis; pyruvate from D-glyceraldehyde 3-phosphate: step 5/5. Activated by fructose 2,6-bisphosphate, activated by the effector in a non cooperative manner. In Leishmania mexicana, this protein is Pyruvate kinase (PYK).